A 103-amino-acid chain; its full sequence is Defensin-like protein 289 (103 aa).

The first 29 residues, 1 to 29 (MATLKTTIFIIFILYISCTMFVNIFRVQA), serve as a signal peptide directing secretion. 6 disulfides stabilise this stretch: Cys-33-Cys-50, Cys-39-Cys-55, Cys-43-Cys-57, Cys-72-Cys-92, Cys-78-Cys-98, and Cys-84-Cys-100.

Belongs to the DEFL family.

It is found in the secreted. In Arabidopsis thaliana (Mouse-ear cress), this protein is Defensin-like protein 289.